Reading from the N-terminus, the 365-residue chain is MAKLSLRNVQKHYAGLQVVHGIDMEIGDGEFIVIVGPSGCGKSTLLRMVAGLEAITGGEVWIGDRVVNELEPAERDIAMVFQNYALYPHMTVFDNMAYGLKIRGLPKSEILARVQQAAGILELGKLLERKPRQLSGGQRQRVAMGRAIVREPAVFLFDEPLSNLDAKLRVQMRLELKELHRRLRTTSLYVTHDQVEAMTLADRMMVLSGGRVEQIGTPLEVYARPASTFVAGFIGSPPMNLVPVSRHAGEGAQIRVDGAQAGDAPATLGHLPMGLHLPEHALMGLRPEHIEPCAADRAIAFVEVRLVEALGADAFAYGALAGHPVVVRLDPHASVKAGDRLPITASADHLHWFDPQTTRRIEALA.

Residues 4-234 enclose the ABC transporter domain; that stretch reads LSLRNVQKHY…PASTFVAGFI (231 aa). 36-43 lines the ATP pocket; that stretch reads GPSGCGKS.

It belongs to the ABC transporter superfamily. sn-glycerol-3-phosphate importer (TC 3.A.1.1.3) family. As to quaternary structure, the complex is composed of two ATP-binding proteins (UgpC), two transmembrane proteins (UgpA and UgpE) and a solute-binding protein (UgpB).

The protein resides in the cell inner membrane. It catalyses the reaction sn-glycerol 3-phosphate(out) + ATP + H2O = sn-glycerol 3-phosphate(in) + ADP + phosphate + H(+). In terms of biological role, part of the ABC transporter complex UgpBAEC involved in sn-glycerol-3-phosphate (G3P) import. Responsible for energy coupling to the transport system. The chain is sn-glycerol-3-phosphate import ATP-binding protein UgpC from Ralstonia nicotianae (strain ATCC BAA-1114 / GMI1000) (Ralstonia solanacearum).